A 505-amino-acid polypeptide reads, in one-letter code: MERSPAVCCQDPRAELVERVAAISVAHLEEAEEGPEPASNGVDPPPRARAASVIPGSASRPTPVRPSLSARKFSLQERPAGSCLEAQVGPYSTGPASHMSPRAWRRPTIESHHVAISDTEDCVQLNQYKLQSEIGKGAYGVVRLAYNEREDRHYAMKVLSKKKLLKQYGFPRRPPPRGSQAPQGGPAKQLLPLERVYQEIAILKKLDHVNVVKLIEVLDDPAEDNLYLVFDLLRKGPVMEVPCDKPFPEEQARLYLRDIILGLEYLHCQKIVHRDIKPSNLLLGDDGHVKIADFGVSNQFEGNDAQLSSTAGTPAFMAPEAISDTGQSFSGKALDVWATGVTLYCFVYGKCPFIDEYILALHRKIKNEAVVFPEEPEVSEELKDLILKMLDKNPETRIGVSDIKLHPWVTKHGEEPLPSEEEHCSVVEVTEEEVKNSVKLIPSWTTVILVKSMLRKRSFGNPFEPQARREERSMSAPGNLLLKEGCGEGGKSPELPGVQEDEAAS.

The segment at 27–66 is disordered; sequence HLEEAEEGPEPASNGVDPPPRARAASVIPGSASRPTPVRP. Residues Ser67 and Ser74 each carry the phosphoserine modification. Arg78 is modified (asymmetric dimethylarginine). The residue at position 100 (Ser100) is a Phosphoserine. Thr108 carries the post-translational modification Phosphothreonine. Residues 128–409 enclose the Protein kinase domain; that stretch reads YKLQSEIGKG…VSDIKLHPWV (282 aa). ATP-binding positions include 134–142 and Lys157; that span reads IGKGAYGVV. The segment at 167–189 is RP domain; it reads QYGFPRRPPPRGSQAPQGGPAKQ. The active-site Proton acceptor is Asp275. An autoinhibitory domain region spans residues 435-440; it reads KNSVKL. Positions 438–463 are calmodulin-binding; it reads VKLIPSWTTVILVKSMLRKRSFGNPF. Phosphoserine occurs at positions 458, 475, and 492. The interval 460–505 is disordered; sequence GNPFEPQARREERSMSAPGNLLLKEGCGEGGKSPELPGVQEDEAAS.

It belongs to the protein kinase superfamily. Ser/Thr protein kinase family. As to quaternary structure, interacts with CAMK4 and calmodulin. Post-translationally, appears to be autophosphorylated. Phosphorylated at multiple sites by PRCAKA/PKA. Phosphorylation of Ser-458 is blocked upon binding to Ca(2+)/calmodulin. May be phosphorylated by CAMK1 and CAMK4. Mostly expressed in the brain with higher levels in cortex and hippocampus. Lower expression levels were detected in striatum, nucleus accumbens and cerebellum (at protein level). Abundant in forebrain, weaker in cerebellum and also detected in thymus and spleen.

It localises to the cytoplasm. The protein localises to the nucleus. It catalyses the reaction L-seryl-[protein] + ATP = O-phospho-L-seryl-[protein] + ADP + H(+). It carries out the reaction L-threonyl-[protein] + ATP = O-phospho-L-threonyl-[protein] + ADP + H(+). Activated by Ca(2+)/calmodulin. Binding of calmodulin may relieve intrasteric autoinhibition. Partially inhibited upon phosphorylation by PRCAKA/PKA. May be regulated through phosphorylation by CAMK1 and CAMK4. Functionally, calcium/calmodulin-dependent protein kinase that belongs to a proposed calcium-triggered signaling cascade involved in a number of cellular processes. Phosphorylates CAMK1, CAMK1D, CAMK1G and CAMK4. Involved in regulating cell apoptosis. Promotes cell survival by phosphorylating AKT1/PKB that inhibits pro-apoptotic BAD/Bcl2-antagonist of cell death. The protein is Calcium/calmodulin-dependent protein kinase kinase 1 (Camkk1) of Rattus norvegicus (Rat).